A 429-amino-acid chain; its full sequence is UDP-N-acetylglucosamine 1-carboxyvinyltransferase (429 aa).

22 to 23 is a binding site for phosphoenolpyruvate; sequence KN. Arginine 102 contacts UDP-N-acetyl-alpha-D-glucosamine. The Proton donor role is filled by cysteine 126. At cysteine 126 the chain carries 2-(S-cysteinyl)pyruvic acid O-phosphothioketal. Residues 131–135, aspartate 316, and isoleucine 338 contribute to the UDP-N-acetyl-alpha-D-glucosamine site; that span reads RPVDL.

This sequence belongs to the EPSP synthase family. MurA subfamily.

The protein localises to the cytoplasm. The catalysed reaction is phosphoenolpyruvate + UDP-N-acetyl-alpha-D-glucosamine = UDP-N-acetyl-3-O-(1-carboxyvinyl)-alpha-D-glucosamine + phosphate. Its pathway is cell wall biogenesis; peptidoglycan biosynthesis. Functionally, cell wall formation. Adds enolpyruvyl to UDP-N-acetylglucosamine. The sequence is that of UDP-N-acetylglucosamine 1-carboxyvinyltransferase from Rhodopseudomonas palustris (strain BisB5).